The chain runs to 335 residues: Nucleoid-associated protein KPK_1538 (335 aa).

It belongs to the YejK family.

It localises to the cytoplasm. The protein localises to the nucleoid. This is Nucleoid-associated protein KPK_1538 from Klebsiella pneumoniae (strain 342).